The following is an 85-amino-acid chain: Large ribosomal subunit protein bL27 (85 aa).

Positions 1 to 21 (MAHKKAGGSTRNGRDSESKRL) are disordered.

The protein belongs to the bacterial ribosomal protein bL27 family.

This Pseudomonas putida (strain W619) protein is Large ribosomal subunit protein bL27.